Reading from the N-terminus, the 410-residue chain is Squalene synthase 1 (410 aa).

N-acetylglycine is present on G2. The next 2 membrane-spanning stretches (helical) occupy residues 283–303 (SIFRFCAIPQIMAIGTLALCY) and 387–407 (QPNSVFIIMVVILLAIVFAYL).

This sequence belongs to the phytoene/squalene synthase family. Mg(2+) serves as cofactor. It depends on Mn(2+) as a cofactor. Expressed in all tissues analyzed (seedlings, cotyledons, inflorescences, siliques, leaves, stems and roots). Highly expressed in roots and pollen.

Its subcellular location is the endoplasmic reticulum membrane. It catalyses the reaction 2 (2E,6E)-farnesyl diphosphate + NADPH + H(+) = squalene + 2 diphosphate + NADP(+). The catalysed reaction is 2 (2E,6E)-farnesyl diphosphate + NADH + H(+) = squalene + 2 diphosphate + NAD(+). It participates in terpene metabolism; lanosterol biosynthesis; lanosterol from farnesyl diphosphate: step 1/3. In Arabidopsis thaliana (Mouse-ear cress), this protein is Squalene synthase 1.